The following is a 512-amino-acid chain: MRIIPRTMCTQHPDYANVPQWVVNDFIKGDDEVYEAYMNYSIYDCQETMWDFEGKDVDIYVVRKLLENYGGFFINKVLGEDIYLTYRLPNPNVEASDRKIFAEALETIPMAYDLARVFYGKPVKAIFEVIFPLTSSSRDLIMTLRYYERIVAGKCSVELDDGLKVSDVIGEVEPKTIEVIPLVEDMESLVRIDSIIEGYVKVAKPQYLRVFIARSDPAMNYGLIPAVLLAKIALSRVYAIGNSLGLSIYPIIGVGPTPFRGNFNPRNVNNTLKEYPGVYTFTVQSAFRYDYPVDNAKDAINLINNSKPTEPVILSSDEEELALTIIRQYTDRYQAEVEGLANAVNYIAQLLPPRRTRRLHIGLFGYGRGFRGVTLPRAIAFVGALYSIGIPPEILGLSTLLKLNERQWGVLEGNYVNLWSDLSDAAQYICMECIEQLPSMKSELRVSKETIAMVLEDIKAIDELGVKVSSPGFEQRKHALLTKLFLESVNNSYINDAKAYLLDMAKVRRAIG.

This sequence belongs to the PEPCase type 2 family. Homotetramer. It depends on Mg(2+) as a cofactor.

It carries out the reaction oxaloacetate + phosphate = phosphoenolpyruvate + hydrogencarbonate. Its function is as follows. Catalyzes the irreversible beta-carboxylation of phosphoenolpyruvate (PEP) to form oxaloacetate (OAA), a four-carbon dicarboxylic acid source for the tricarboxylic acid cycle. In Caldivirga maquilingensis (strain ATCC 700844 / DSM 13496 / JCM 10307 / IC-167), this protein is Phosphoenolpyruvate carboxylase.